A 224-amino-acid chain; its full sequence is MRKIVTIDGPSGVGKGTVAQALARRHGWAYLDSGAVYRLAALFLKRQNLSLAATATQVAALQEMAVDFVMTETVVRVFLNGVAIDDVLRREETGALASQLAVKPEIRAALLDFQRNFAGDAPLIADGRDMGTVVFPEAPLKIFLDATAEIRAERRYKQLIEKGEDVTLAALKKEIAARDARDRNRLVAPLKPASDAVLIDTTDLSVQAVLEKIDALWQAHFFNF.

An ATP-binding site is contributed by glycine 9–threonine 17.

Belongs to the cytidylate kinase family. Type 1 subfamily.

The protein resides in the cytoplasm. The enzyme catalyses CMP + ATP = CDP + ADP. It carries out the reaction dCMP + ATP = dCDP + ADP. The protein is Cytidylate kinase of Dichelobacter nodosus (strain VCS1703A).